Consider the following 246-residue polypeptide: MKIVPPKPFFFEAGERAVLLLHGFTGNSADVRMLGRFLESKGYTCHAPIYKGHGVPPEELVHTGPDDWWQDVMNGYEFLKNKGYEKIAVAGLSLGGVFSLKLGYTVPIEGIVTMCAPMYIKSEETMYEGVLEYAREYKKREGKSEEQIEQEMEKFKQTPMKTLKALQELIADVRDHLDLIYAPTFVVQARHDEMINPDSANIIYNEIESPVKQIKWYEQSGHVITLDQEKDQLHEDIYAFLESLDW.

S93 functions as the Nucleophile in the catalytic mechanism. Residues D192 and H222 each act as charge relay system in the active site.

This sequence belongs to the lipase/esterase LIP3/BchO family. Homodimer.

The enzyme catalyses a carboxylic ester + H2O = an alcohol + a carboxylate + H(+). Involved in the detoxification of xenobiotics. Shows maximal activity with C6 substrates, with gradually decreasing activity from C8 to C12 substrates. No activity for higher chain length substrates acids rather than long-chain ones. The protein is Carboxylesterase (est) of Geobacillus stearothermophilus (Bacillus stearothermophilus).